The primary structure comprises 282 residues: Bis(5'-nucleosyl)-tetraphosphatase, symmetrical (282 aa).

Belongs to the Ap4A hydrolase family.

The catalysed reaction is P(1),P(4)-bis(5'-adenosyl) tetraphosphate + H2O = 2 ADP + 2 H(+). Functionally, hydrolyzes diadenosine 5',5'''-P1,P4-tetraphosphate to yield ADP. The polypeptide is Bis(5'-nucleosyl)-tetraphosphatase, symmetrical (Escherichia coli O81 (strain ED1a)).